A 515-amino-acid chain; its full sequence is Membrane-bound lytic murein transglycosylase F (515 aa).

An N-terminal signal peptide occupies residues 1–32; sequence MKKLKINYLFIGILTLLLAAALWPSIPWFGKA. The interval 33–269 is non-LT domain; it reads DNRIAAIQSR…RMEEKYLGHG (237 aa). Residues 270 to 515 are LT domain; it reads DDFDYVDTRT…PFSLKKKDEN (246 aa). The active site involves Glu314. The segment at 493–515 is disordered; the sequence is QPSSNYLSHSPSLPFSLKKKDEN.

In the N-terminal section; belongs to the bacterial solute-binding protein 3 family. The protein in the C-terminal section; belongs to the transglycosylase Slt family.

It localises to the cell outer membrane. It catalyses the reaction Exolytic cleavage of the (1-&gt;4)-beta-glycosidic linkage between N-acetylmuramic acid (MurNAc) and N-acetylglucosamine (GlcNAc) residues in peptidoglycan, from either the reducing or the non-reducing ends of the peptidoglycan chains, with concomitant formation of a 1,6-anhydrobond in the MurNAc residue.. Its function is as follows. Murein-degrading enzyme that degrades murein glycan strands and insoluble, high-molecular weight murein sacculi, with the concomitant formation of a 1,6-anhydromuramoyl product. Lytic transglycosylases (LTs) play an integral role in the metabolism of the peptidoglycan (PG) sacculus. Their lytic action creates space within the PG sacculus to allow for its expansion as well as for the insertion of various structures such as secretion systems and flagella. The sequence is that of Membrane-bound lytic murein transglycosylase F from Citrobacter koseri (strain ATCC BAA-895 / CDC 4225-83 / SGSC4696).